The following is a 76-amino-acid chain: Small ribosomal subunit protein bS18 (76 aa).

The protein belongs to the bacterial ribosomal protein bS18 family. As to quaternary structure, part of the 30S ribosomal subunit. Forms a tight heterodimer with protein bS6.

Functionally, binds as a heterodimer with protein bS6 to the central domain of the 16S rRNA, where it helps stabilize the platform of the 30S subunit. This chain is Small ribosomal subunit protein bS18, found in Desulfitobacterium hafniense (strain Y51).